Consider the following 374-residue polypeptide: O-methyltransferase 16 (374 aa).

S-adenosyl-L-homocysteine-binding residues include Ser195, Gly219, Asp242, Asp262, and Lys276. Asp242 contacts S-adenosyl-L-methionine. The Proton acceptor role is filled by His280.

This sequence belongs to the class I-like SAM-binding methyltransferase superfamily. Cation-independent O-methyltransferase family. As to quaternary structure, homodimer. Expressed mainly in vasculature and cortex tissues at low levels.

The enzyme catalyses dopamine + S-adenosyl-L-methionine = 4-methoxytyramine + S-adenosyl-L-homocysteine + H(+). It participates in aromatic compound metabolism. It functions in the pathway alkaloid biosynthesis. Its function is as follows. O-methyltransferase participating in the biosynthesis of natural products derived from phenylethylamine, including mescaline, a natural hallucinogen potentially used in psychotherapeutic treatments. Catalyzes the O-methylation of dopamine to produce 4-methoxytyramine. The protein is O-methyltransferase 16 of Lophophora williamsii (Peyote).